The following is a 354-amino-acid chain: NADH-quinone oxidoreductase subunit H (354 aa).

Transmembrane regions (helical) follow at residues 25-45, 91-111, 126-146, 170-190, 205-225, 267-287, 290-310, and 330-350; these read LVRI…LILW, WIYM…WAVI, LLYA…AGWA, MGFA…SGIV, FLSW…ISGI, IVIS…PFGF, FIPG…VFIW, and IFIP…MSPL.

It belongs to the complex I subunit 1 family. In terms of assembly, NDH-1 is composed of 14 different subunits. Subunits NuoA, H, J, K, L, M, N constitute the membrane sector of the complex.

The protein resides in the cell inner membrane. The enzyme catalyses a quinone + NADH + 5 H(+)(in) = a quinol + NAD(+) + 4 H(+)(out). NDH-1 shuttles electrons from NADH, via FMN and iron-sulfur (Fe-S) centers, to quinones in the respiratory chain. The immediate electron acceptor for the enzyme in this species is believed to be ubiquinone. Couples the redox reaction to proton translocation (for every two electrons transferred, four hydrogen ions are translocated across the cytoplasmic membrane), and thus conserves the redox energy in a proton gradient. This subunit may bind ubiquinone. The chain is NADH-quinone oxidoreductase subunit H from Paraburkholderia xenovorans (strain LB400).